The following is a 152-amino-acid chain: Ribonuclease HI (152 aa).

The RNase H type-1 domain occupies 1–142 (MDSKVVIYTD…ADKLAVQGRE (142 aa)). 4 residues coordinate Mg(2+): Asp10, Glu48, Asp70, and Asp134.

Belongs to the RNase H family. In terms of assembly, monomer. The cofactor is Mg(2+).

Its subcellular location is the cytoplasm. It carries out the reaction Endonucleolytic cleavage to 5'-phosphomonoester.. In terms of biological role, endonuclease that specifically degrades the RNA of RNA-DNA hybrids. In Rickettsia conorii (strain ATCC VR-613 / Malish 7), this protein is Ribonuclease HI.